The following is an 88-amino-acid chain: HssA/B-like protein 11 (88 aa).

This sequence belongs to the hssA/B family.

In Dictyostelium discoideum (Social amoeba), this protein is HssA/B-like protein 11 (hssl11).